Reading from the N-terminus, the 169-residue chain is Sec-independent protein translocase protein TatB (169 aa).

A helical membrane pass occupies residues 1–21; it reads MFDIGFLELAVIAVIGLIVIG. Residues 98-169 are disordered; that stretch reads EAEEAKLQTP…TTKTEPANDR (72 aa). The segment covering 134–143 has biased composition (basic and acidic residues); it reads PPEEPSKVEA. Polar residues predominate over residues 146-169; sequence SAETPQANNQDQQPTTKTEPANDR.

It belongs to the TatB family. As to quaternary structure, the Tat system comprises two distinct complexes: a TatABC complex, containing multiple copies of TatA, TatB and TatC subunits, and a separate TatA complex, containing only TatA subunits. Substrates initially bind to the TatABC complex, which probably triggers association of the separate TatA complex to form the active translocon.

Its subcellular location is the cell inner membrane. Its function is as follows. Part of the twin-arginine translocation (Tat) system that transports large folded proteins containing a characteristic twin-arginine motif in their signal peptide across membranes. Together with TatC, TatB is part of a receptor directly interacting with Tat signal peptides. TatB may form an oligomeric binding site that transiently accommodates folded Tat precursor proteins before their translocation. The chain is Sec-independent protein translocase protein TatB from Saccharophagus degradans (strain 2-40 / ATCC 43961 / DSM 17024).